A 100-amino-acid chain; its full sequence is Small ribosomal subunit protein bS20 (100 aa).

It belongs to the bacterial ribosomal protein bS20 family.

Binds directly to 16S ribosomal RNA. The sequence is that of Small ribosomal subunit protein bS20 from Synechococcus sp. (strain JA-3-3Ab) (Cyanobacteria bacterium Yellowstone A-Prime).